The chain runs to 409 residues: Serine/threonine transporter SstT (409 aa).

8 helical membrane-spanning segments follow: residues 24–44 (LALGIVIGSVSPQLGLAAGLF), 48–68 (FVGALKAVAPVLVFILVAATI), 82–102 (IIVLYLIGTFSAALTAVIAGM), 142–162 (AIANANYIGILAWALVLGAAL), 194–214 (LGIFGLVSSTIAETGFGALAG), 218–238 (LLAVLLGCMAFIALAVNPAIV), 292–312 (IPLGATINMAGAAITITVLAM), and 319–339 (GITVDFATALLLSLVATVSAC).

This sequence belongs to the dicarboxylate/amino acid:cation symporter (DAACS) (TC 2.A.23) family.

The protein resides in the cell inner membrane. It catalyses the reaction L-serine(in) + Na(+)(in) = L-serine(out) + Na(+)(out). The enzyme catalyses L-threonine(in) + Na(+)(in) = L-threonine(out) + Na(+)(out). Its function is as follows. Involved in the import of serine and threonine into the cell, with the concomitant import of sodium (symport system). The chain is Serine/threonine transporter SstT from Neisseria meningitidis serogroup B (strain ATCC BAA-335 / MC58).